We begin with the raw amino-acid sequence, 919 residues long: Phosphoenolpyruvate carboxylase (919 aa).

Residues His-138 and Lys-579 contribute to the active site.

Belongs to the PEPCase type 1 family. Mg(2+) serves as cofactor.

It carries out the reaction oxaloacetate + phosphate = phosphoenolpyruvate + hydrogencarbonate. Its function is as follows. Forms oxaloacetate, a four-carbon dicarboxylic acid source for the tricarboxylic acid cycle. The chain is Phosphoenolpyruvate carboxylase (ppc) from Corynebacterium efficiens (strain DSM 44549 / YS-314 / AJ 12310 / JCM 11189 / NBRC 100395).